A 441-amino-acid polypeptide reads, in one-letter code: Ribosomal protein uS12 methylthiotransferase RimO (441 aa).

Residues 8–118 (PKIGFVSLGC…VLEHVHHYTP (111 aa)) form the MTTase N-terminal domain. [4Fe-4S] cluster contacts are provided by cysteine 17, cysteine 53, cysteine 82, cysteine 150, cysteine 154, and cysteine 157. One can recognise a Radical SAM core domain in the interval 136-373 (LTPRHYAYLK…MQLQQQISAE (238 aa)). The 66-residue stretch at 376–441 (QEKVGREILV…DEYDLWGTRV (66 aa)) folds into the TRAM domain.

It belongs to the methylthiotransferase family. RimO subfamily. It depends on [4Fe-4S] cluster as a cofactor.

The protein localises to the cytoplasm. It carries out the reaction L-aspartate(89)-[ribosomal protein uS12]-hydrogen + (sulfur carrier)-SH + AH2 + 2 S-adenosyl-L-methionine = 3-methylsulfanyl-L-aspartate(89)-[ribosomal protein uS12]-hydrogen + (sulfur carrier)-H + 5'-deoxyadenosine + L-methionine + A + S-adenosyl-L-homocysteine + 2 H(+). In terms of biological role, catalyzes the methylthiolation of an aspartic acid residue of ribosomal protein uS12. In Klebsiella pneumoniae subsp. pneumoniae (strain ATCC 700721 / MGH 78578), this protein is Ribosomal protein uS12 methylthiotransferase RimO.